Consider the following 537-residue polypeptide: Probable protein kinase UbiB (537 aa).

Residues 30 to 47 (LLPWWLRALGYLLPWRWL) form a helical membrane-spanning segment. Residues 126–490 (RFDSEPLASA…KRERHDHHLL (365 aa)) form the Protein kinase domain. ATP is bound by residues 132–140 (LASASVAQV) and lysine 154. The Proton acceptor role is filled by aspartate 289. 2 helical membrane passes run 489-507 (LLRLLGAALLAGGVLLALQ) and 513-530 (ANAWPSWLMLASGLYLLV).

The protein belongs to the ABC1 family. UbiB subfamily.

It localises to the cell inner membrane. It functions in the pathway cofactor biosynthesis; ubiquinone biosynthesis [regulation]. Is probably a protein kinase regulator of UbiI activity which is involved in aerobic coenzyme Q (ubiquinone) biosynthesis. The sequence is that of Probable protein kinase UbiB from Azotobacter vinelandii (strain DJ / ATCC BAA-1303).